The sequence spans 193 residues: Interferon lambda-2 (193 aa).

Positions 1-19 are cleaved as a signal peptide; sequence MLLLLLPLLLAAVLTRTQA. An N-linked (GlcNAc...) asparagine glycan is attached at N105.

The protein belongs to the lambda interferon family.

It is found in the secreted. Its function is as follows. Cytokine with antiviral, antitumour and immunomodulatory activities. Plays a critical role in the antiviral host defense, predominantly in the epithelial tissues. Acts as a ligand for the heterodimeric class II cytokine receptor composed of IL10RB and IFNLR1, and receptor engagement leads to the activation of the JAK/STAT signaling pathway resulting in the expression of IFN-stimulated genes (ISG), which mediate the antiviral state. Has a restricted receptor distribution and therefore restricted targets: is primarily active in epithelial cells and this cell type-selective action is because of the epithelial cell-specific expression of its receptor IFNLR1. Seems not to be essential for early virus-activated host defense in vaginal infection, but plays an important role in Toll-like receptor (TLR)-induced antiviral defense. Plays a significant role in the antiviral immune defense in the intestinal epithelium. Exerts an immunomodulatory effect by up-regulating MHC class I antigen expression. The protein is Interferon lambda-2 (Ifnl2) of Mus musculus (Mouse).